The primary structure comprises 83 residues: Small ribosomal subunit protein uS17 (83 aa).

Belongs to the universal ribosomal protein uS17 family. Part of the 30S ribosomal subunit.

One of the primary rRNA binding proteins, it binds specifically to the 5'-end of 16S ribosomal RNA. The sequence is that of Small ribosomal subunit protein uS17 from Campylobacter concisus (strain 13826).